A 201-amino-acid chain; its full sequence is Small ribosomal subunit protein uS10m (201 aa).

This sequence belongs to the universal ribosomal protein uS10 family. In terms of assembly, component of the mitochondrial ribosome small subunit (28S) which comprises a 12S rRNA and about 30 distinct proteins.

Its subcellular location is the mitochondrion. The protein is Small ribosomal subunit protein uS10m (MRPS10) of Pongo abelii (Sumatran orangutan).